A 286-amino-acid polypeptide reads, in one-letter code: Urease accessory protein UreD (286 aa).

The protein belongs to the UreD family. As to quaternary structure, ureD, UreF and UreG form a complex that acts as a GTP-hydrolysis-dependent molecular chaperone, activating the urease apoprotein by helping to assemble the nickel containing metallocenter of UreC. The UreE protein probably delivers the nickel.

It is found in the cytoplasm. In terms of biological role, required for maturation of urease via the functional incorporation of the urease nickel metallocenter. The protein is Urease accessory protein UreD of Rhodopseudomonas palustris (strain BisA53).